The sequence spans 142 residues: Large ribosomal subunit protein uL11 (142 aa).

This sequence belongs to the universal ribosomal protein uL11 family. Part of the ribosomal stalk of the 50S ribosomal subunit. Interacts with L10 and the large rRNA to form the base of the stalk. L10 forms an elongated spine to which L12 dimers bind in a sequential fashion forming a multimeric L10(L12)X complex. In terms of processing, one or more lysine residues are methylated.

Forms part of the ribosomal stalk which helps the ribosome interact with GTP-bound translation factors. The sequence is that of Large ribosomal subunit protein uL11 from Shewanella pealeana (strain ATCC 700345 / ANG-SQ1).